The chain runs to 151 residues: NADPH-dependent 7-cyano-7-deazaguanine reductase (151 aa).

Cys-51 functions as the Thioimide intermediate in the catalytic mechanism. The active-site Proton donor is the Asp-58. Residues 73-75 (VES) and 92-93 (HE) each bind substrate.

This sequence belongs to the GTP cyclohydrolase I family. QueF type 1 subfamily.

It is found in the cytoplasm. It carries out the reaction 7-aminomethyl-7-carbaguanine + 2 NADP(+) = 7-cyano-7-deazaguanine + 2 NADPH + 3 H(+). The protein operates within tRNA modification; tRNA-queuosine biosynthesis. Functionally, catalyzes the NADPH-dependent reduction of 7-cyano-7-deazaguanine (preQ0) to 7-aminomethyl-7-deazaguanine (preQ1). This Bacteroides fragilis (strain ATCC 25285 / DSM 2151 / CCUG 4856 / JCM 11019 / LMG 10263 / NCTC 9343 / Onslow / VPI 2553 / EN-2) protein is NADPH-dependent 7-cyano-7-deazaguanine reductase.